The chain runs to 375 residues: Carbamoyl phosphate synthase small chain (375 aa).

The interval 1–180 is CPSase; that stretch reads MSKALLVLED…DAYVVEPKGK (180 aa). S46, G232, and G234 together coordinate L-glutamine. The region spanning 184–375 is the Glutamine amidotransferase type-1 domain; sequence TVAALDLGIK…SFVELMAAQR (192 aa). The active-site Nucleophile is C260. Positions 261, 264, 302, 304, and 305 each coordinate L-glutamine. Residues H350 and E352 contribute to the active site.

Belongs to the CarA family. In terms of assembly, composed of two chains; the small (or glutamine) chain promotes the hydrolysis of glutamine to ammonia, which is used by the large (or ammonia) chain to synthesize carbamoyl phosphate. Tetramer of heterodimers (alpha,beta)4.

It carries out the reaction hydrogencarbonate + L-glutamine + 2 ATP + H2O = carbamoyl phosphate + L-glutamate + 2 ADP + phosphate + 2 H(+). It catalyses the reaction L-glutamine + H2O = L-glutamate + NH4(+). It functions in the pathway amino-acid biosynthesis; L-arginine biosynthesis; carbamoyl phosphate from bicarbonate: step 1/1. Its pathway is pyrimidine metabolism; UMP biosynthesis via de novo pathway; (S)-dihydroorotate from bicarbonate: step 1/3. Small subunit of the glutamine-dependent carbamoyl phosphate synthetase (CPSase). CPSase catalyzes the formation of carbamoyl phosphate from the ammonia moiety of glutamine, carbonate, and phosphate donated by ATP, constituting the first step of 2 biosynthetic pathways, one leading to arginine and/or urea and the other to pyrimidine nucleotides. The small subunit (glutamine amidotransferase) binds and cleaves glutamine to supply the large subunit with the substrate ammonia. The protein is Carbamoyl phosphate synthase small chain of Mycobacterium leprae (strain TN).